Reading from the N-terminus, the 321-residue chain is MTRPPLVRGIFSLGLSVAVLKGVEKTVRKHLERQGWIEPQKVDYELIFTIDRLKNLVDNKREALTAEQPDAGELSWRKVFNFISRQSSELDTRIYVLILLLSFLLPIAWTVLDGDRETTLEDKDNDCNVDLIENERRLKHYNDGERAVLQFGKNRSEPIILSYKDMNVLEGEHEFTSKEEHSNSHLTSKSENALNQVGSEDLLGCHLEKQLEEDKNEPNGEADGEDDNNREKDCSSSSEVESQSKCRKESTAEPDSLSRDTRTTSSLKSSTSFPISFKGSIDLKSLNQPSSLLHIQVSPTKSSNLDAQVNTEQAYSQPFRY.

The signal sequence occupies residues 1–22 (MTRPPLVRGIFSLGLSVAVLKG). The segment at 73 to 125 (ELSWRKVFNFISRQSSELDTRIYVLILLLSFLLPIAWTVLDGDRETTLEDKDN) is TSC13-binding. The helical transmembrane segment at 94-114 (IYVLILLLSFLLPIAWTVLDG) threads the bilayer. Residues 139-195 (KHYNDGERAVLQFGKNRSEPIILSYKDMNVLEGEHEFTSKEEHSNSHLTSKSENALN) are OSH1-binding. Phosphoserine is present on residues Ser156 and Ser199. Residues 211–275 (LEEDKNEPNG…SLKSSTSFPI (65 aa)) are disordered. The VAC8-binding stretch occupies residues 233-321 (DCSSSSEVES…EQAYSQPFRY (89 aa)). The segment covering 242 to 262 (SQSKCRKESTAEPDSLSRDTR) has biased composition (basic and acidic residues). Residues 263-272 (TTSSLKSSTS) are compositionally biased toward low complexity. Phosphoserine is present on residues Ser285 and Ser298. Positions 299 to 321 (PTKSSNLDAQVNTEQAYSQPFRY) are disordered.

As to quaternary structure, interacts with OSH1, TSC13 and VAC8.

It localises to the nucleus outer membrane. Functionally, involved in the formation of nucleus-vacuole junctions (NVJs) during piecemeal microautophagy of the nucleus (PMN). NVJs are interorganelle interfaces mediated by NVJ1 in the nuclear envelope and VAC8 on the vacuole membrane. Together, NVJ1 and VAC8 form Velcro-like patches through which teardrop-like portions of the nucleus are pinched off into the vacuolar lumen and degraded by the PMN process. Also acts as an outer-nuclear membrane receptor for OSH1 and TSC13. The chain is Nucleus-vacuole junction protein 1 (NVJ1) from Saccharomyces cerevisiae (strain ATCC 204508 / S288c) (Baker's yeast).